The following is a 132-amino-acid chain: Nickel-responsive regulator (132 aa).

The Ni(2+) site is built by H76, H87, H89, and C95.

This sequence belongs to the transcriptional regulatory CopG/NikR family. In terms of assembly, homotetramer. Requires Ni(2+) as cofactor.

In terms of biological role, transcriptional repressor of the nikABCDE operon. Is active in the presence of excessive concentrations of intracellular nickel. This Klebsiella pneumoniae (strain 342) protein is Nickel-responsive regulator.